The following is a 347-amino-acid chain: Autoinducer 2 import system permease protein LsrC (347 aa).

Helical transmembrane passes span 14–34 (LLAI…YLSV), 39–59 (MVFS…MVML), 72–92 (GMCA…PVAC), 93–113 (LATL…VAWL), 115–135 (IPAI…MLLW), 155–175 (VFLG…LMAW), 213–233 (LNGG…GFIP), 249–269 (VLGG…ILGA), and 284–304 (IPAW…LVFD).

Belongs to the binding-protein-dependent transport system permease family. AraH/RbsC subfamily. As to quaternary structure, the complex is composed of two ATP-binding proteins (LsrA), two transmembrane proteins (LsrC and LsrD) and a solute-binding protein (LsrB).

It is found in the cell inner membrane. Functionally, part of the ABC transporter complex LsrABCD involved in autoinducer 2 (AI-2) import. Probably responsible for the translocation of the substrate across the membrane. The chain is Autoinducer 2 import system permease protein LsrC (lsrC) from Salmonella typhi.